Reading from the N-terminus, the 249-residue chain is Segregation and condensation protein A (249 aa).

It belongs to the ScpA family. Component of a cohesin-like complex composed of ScpA, ScpB and the Smc homodimer, in which ScpA and ScpB bind to the head domain of Smc. The presence of the three proteins is required for the association of the complex with DNA.

Its subcellular location is the cytoplasm. Participates in chromosomal partition during cell division. May act via the formation of a condensin-like complex containing Smc and ScpB that pull DNA away from mid-cell into both cell halves. The chain is Segregation and condensation protein A from Clostridium acetobutylicum (strain ATCC 824 / DSM 792 / JCM 1419 / IAM 19013 / LMG 5710 / NBRC 13948 / NRRL B-527 / VKM B-1787 / 2291 / W).